Consider the following 635-residue polypeptide: Probable potassium transport system protein Kup (635 aa).

Helical transmembrane passes span 22 to 42, 59 to 79, 111 to 131, 148 to 168, 180 to 200, 216 to 236, 259 to 279, 297 to 317, 349 to 369, 378 to 398, 404 to 424, and 428 to 448; these read LVIGAIGVVFGDIGTSPLYTL, VLGILSLVFWALMLVVTLKYV, MYVVGILGIFGASLFFGDGVI, APKLEAFVVPITLVVLGMLFL, AFGPITLVWFFALGAIGVYNM, VLFFVEHNWHAVFVLGAVVLA, WQFVVLPMLTLTYLGQGALVL, ALYPMIVLATAATVIASQALI, IYVPAVNWCLLLAVAVAVVGF, AYGVSVTGTMLITTVLMVIYA, VPAPLLWLFALVFLAVDCAFF, and IIKFLDGAWFPLLLGLILFTL.

It belongs to the HAK/KUP transporter (TC 2.A.72) family.

The protein resides in the cell inner membrane. It carries out the reaction K(+)(in) + H(+)(in) = K(+)(out) + H(+)(out). Transport of potassium into the cell. Likely operates as a K(+):H(+) symporter. In Xanthomonas oryzae pv. oryzae (strain KACC10331 / KXO85), this protein is Probable potassium transport system protein Kup.